Here is a 314-residue protein sequence, read N- to C-terminus: tRNA dimethylallyltransferase (314 aa).

8 to 15 contacts ATP; the sequence is GPTGAGKS. Substrate is bound at residue 10 to 15; the sequence is TGAGKS.

It belongs to the IPP transferase family. As to quaternary structure, monomer. Mg(2+) serves as cofactor.

It catalyses the reaction adenosine(37) in tRNA + dimethylallyl diphosphate = N(6)-dimethylallyladenosine(37) in tRNA + diphosphate. In terms of biological role, catalyzes the transfer of a dimethylallyl group onto the adenine at position 37 in tRNAs that read codons beginning with uridine, leading to the formation of N6-(dimethylallyl)adenosine (i(6)A). This is tRNA dimethylallyltransferase from Mycobacterium tuberculosis (strain ATCC 25177 / H37Ra).